The primary structure comprises 297 residues: MRGGFGRGGGGRGGSRGGRGGFGRGGGRGGGRGGGRGGGRGGGRGGGRGGGRGGAGAKVIVEPHMLHPGVFISKAKTDSLCTLNMVPGISVYGEKRIELGATQGGDDKKEYRLWNPYRSKLASAIYAGVSSIHMGPGSKVLYLGGATGTTVSHVSDLVGPEGMVYAVEFSHRVGRDLVEMSKRRPIVPIVEDARYPMKYRMLVPMVDCIFMDVAQPDQARILALNAQAFLQNGGHYVISIKANCIDSTLEAPVVIASELNKLKKDKLKPLEQVSLEPFERDHAVVVGVYRPVKKSKQ.

The disordered stretch occupies residues Met1–Gly56. Residues Arg2, Arg7, Arg12, Arg16, Arg19, Arg24, Arg28, Arg32, Arg36, Arg40, Arg44, Arg48, and Arg52 each carry the asymmetric dimethylarginine modification. S-adenosyl-L-methionine-binding positions include Thr149 to Thr150, Glu168 to Phe169, Asp192 to Ala193, and Asp212 to Gln215.

Belongs to the methyltransferase superfamily. Fibrillarin family. In terms of assembly, component of box C/D small nucleolar ribonucleoprotein (snoRNP) particles. It is associated with the U3, U8 and U13 small nuclear RNAs. By homology to other fibrillarins, some or all of the N-terminal domain arginines are modified to asymmetric dimethylarginine (DMA).

The protein resides in the nucleus. The protein localises to the nucleolus. The enzyme catalyses L-glutaminyl-[histone H2A] + S-adenosyl-L-methionine = N(5)-methyl-L-glutaminyl-[histone H2A] + S-adenosyl-L-homocysteine + H(+). Functionally, S-adenosyl-L-methionine-dependent methyltransferase that has the ability to methylate both RNAs and proteins. Involved in pre-rRNA processing. Utilizes the methyl donor S-adenosyl-L-methionine to catalyze the site-specific 2'-hydroxyl methylation of ribose moieties in pre-ribosomal RNA. Site specificity is provided by a guide RNA that base pairs with the substrate. Methylation occurs at a characteristic distance from the sequence involved in base pairing with the guide RNA. Also acts as a protein methyltransferase by mediating methylation of 'Gln-105' of histone H2A (H2AQ105me), a modification that impairs binding of the FACT complex and is specifically present at 35S ribosomal DNA locus. The chain is rRNA 2'-O-methyltransferase fibrillarin from Leishmania major.